We begin with the raw amino-acid sequence, 284 residues long: Hemin import ATP-binding protein HmuV (284 aa).

Residues Leu-33–Glu-266 form the ABC transporter domain. Gly-65 to Ser-72 provides a ligand contact to ATP.

It belongs to the ABC transporter superfamily. Heme (hemin) importer (TC 3.A.1.14.5) family. The complex is composed of two ATP-binding proteins (HmuV), two transmembrane proteins (HmuU) and a solute-binding protein (HmuT).

It localises to the cell membrane. Its function is as follows. Part of the ABC transporter complex HmuTUV involved in hemin import. Responsible for energy coupling to the transport system. In Thermobifida fusca (strain YX), this protein is Hemin import ATP-binding protein HmuV.